Consider the following 384-residue polypeptide: Guanine nucleotide-binding protein alpha-1 subunit (384 aa).

A lipid anchor (N-myristoyl glycine) is attached at G2. The S-palmitoyl cysteine moiety is linked to residue C5. Residues 38-384 (HIRKLLLLGA…RRNLFEAGLL (347 aa)) enclose the G-alpha domain. The interval 41 to 54 (KLLLLGAGESGKST) is G1 motif. GTP-binding residues include E49, S50, G51, K52, S53, T54, D163, L188, T194, G222, N288, K289, D291, and A356. S53 provides a ligand contact to Mg(2+). A G2 motif region spans residues 186–194 (DVLLARVRT). Residue T194 participates in Mg(2+) binding. The segment at 215-224 (YRLFDVGGQR) is G3 motif. Residues 284–291 (MLFLNKFD) form a G4 motif region. The tract at residues 354–359 (TTALDQ) is G5 motif.

The protein belongs to the G-alpha family. In terms of assembly, g proteins are composed of 3 units; alpha, beta and gamma. The alpha chain contains the guanine nucleotide binding site. The cofactor is Mg(2+).

Guanine nucleotide-binding proteins (G proteins) are involved as modulators or transducers in various transmembrane signaling systems. The polypeptide is Guanine nucleotide-binding protein alpha-1 subunit (GPA1) (Pisum sativum (Garden pea)).